Consider the following 162-residue polypeptide: NADH-quinone oxidoreductase subunit I (162 aa).

4Fe-4S ferredoxin-type domains follow at residues 53 to 83 (LRRY…IESD) and 93 to 122 (TRYD…ETHI). [4Fe-4S] cluster is bound by residues Cys-63, Cys-66, Cys-69, Cys-73, Cys-102, Cys-105, Cys-108, and Cys-112.

This sequence belongs to the complex I 23 kDa subunit family. In terms of assembly, NDH-1 is composed of 14 different subunits. Subunits NuoA, H, J, K, L, M, N constitute the membrane sector of the complex. [4Fe-4S] cluster is required as a cofactor.

The protein resides in the cell inner membrane. The enzyme catalyses a quinone + NADH + 5 H(+)(in) = a quinol + NAD(+) + 4 H(+)(out). In terms of biological role, NDH-1 shuttles electrons from NADH, via FMN and iron-sulfur (Fe-S) centers, to quinones in the respiratory chain. The immediate electron acceptor for the enzyme in this species is believed to be ubiquinone. Couples the redox reaction to proton translocation (for every two electrons transferred, four hydrogen ions are translocated across the cytoplasmic membrane), and thus conserves the redox energy in a proton gradient. This chain is NADH-quinone oxidoreductase subunit I, found in Bordetella avium (strain 197N).